We begin with the raw amino-acid sequence, 317 residues long: tRNA dimethylallyltransferase (317 aa).

Residue 13-20 coordinates ATP; the sequence is GPTASGKS. Substrate is bound at residue 15–20; that stretch reads TASGKS.

The protein belongs to the IPP transferase family. As to quaternary structure, monomer. Mg(2+) is required as a cofactor.

The catalysed reaction is adenosine(37) in tRNA + dimethylallyl diphosphate = N(6)-dimethylallyladenosine(37) in tRNA + diphosphate. Functionally, catalyzes the transfer of a dimethylallyl group onto the adenine at position 37 in tRNAs that read codons beginning with uridine, leading to the formation of N6-(dimethylallyl)adenosine (i(6)A). The polypeptide is tRNA dimethylallyltransferase (Kineococcus radiotolerans (strain ATCC BAA-149 / DSM 14245 / SRS30216)).